The chain runs to 1024 residues: Non-canonical nonribosomal peptide synthetase FrzA (1024 aa).

The adenylation (A) domain stretch occupies residues 29–425 (RAQKSHQAIA…GRRDHQVKVR (397 aa)). Positions 534–611 (NASQDVRSAL…ALTSIIKQRL (78 aa)) constitute a Carrier domain. O-(pantetheine 4'-phosphoryl)serine is present on serine 571. Positions 655–898 (LTGGTGFVGA…VPVDYVNAAI (244 aa)) constitute a Thioester reductase (TE) domain.

It belongs to the NRP synthetase family. Pantetheine 4'-phosphate is required as a cofactor.

The enzyme catalyses L-tyrosinal + AMP + diphosphate + NADP(+) = L-tyrosine + ATP + NADPH + H(+). It functions in the pathway secondary metabolite biosynthesis. Functionally, non-canonical nonribosomal peptide synthetase; part of the gene cluster that mediates the biosynthesis of the alkaloid (-)-FR901483, a potent immunosuppressant that shows efficacy in animal models and a probable inhibitor of purine nucleotide biosynthesis by targeting phosphoribosylpyrophosphate amidotransferase (PPAT). Within the pathway, FrzA catalyzes the reduction of L-tyrosine via its C-terminal reductase domain to produce L-tyrosinal. The biosynthesis of (-)-FR901483 starts with the condensation of two L-tyrosines to yield (S,S)-dityrosyl-piperazine. This process occurs in 3 steps with the non-canonical nonribosomal peptide synthetase FrzA catalyzing the reduction of L-tyrosine into L-tyrosinal, the spontaneous condensation of 2 L-tyrosinal units, and the subsequent reduction by the NmrA-like family domain-containing oxidoreductase FrzB. The cytochrome P450 monooxygenase FrzC then performs coupling between N10 and C1' to morph the piperazine into a 1,4-diazabicyclo[3.2.1]octane spiro-fused to a 2,5-cyclohexadienone. The dienone portion is further reduced to cyclohexanone by the flavin-dependent reductase FrzD. The methyltranserases (MTs) FrzE and FrzF are then involved in the methylation at the C10' amine and the C4 phenolic oxygen, respectively. The order of the two MTs appear to be interchangeable. Cleavage of the C9-N10' bond by the dioxygenase FrzG then leads to formation of a conjugated iminium. In addition to the oxidation of C9, an additional dehydrogenation between C7 and C8 can occur to give a likely shunt product. The next biosynthetic step is the intramolecular aldol condensation catalyzed by the newly identified aldolase FrzH to yield an aza-tricyclic product with the formation of a C9-C3' bond. The short-chain dehydrogenase/reductase FrzI then produces dephospho-(-)-FR901483 that is phosphorylated at C4'-OH into (-)-FR901483 by the phosphotransferase FrzJ. The chain is Non-canonical nonribosomal peptide synthetase FrzA from Cladobotryum sp.